We begin with the raw amino-acid sequence, 529 residues long: Serine/threonine-protein kinase RIO2 (529 aa).

The Protein kinase domain maps to 97-273 (VGNQIGIGKE…RDVTCVRTFF (177 aa)). Lysine 123 contributes to the ATP binding site. Aspartate 228 serves as the catalytic Proton acceptor. 2 disordered regions span residues 331–366 (RNRQ…KDHE) and 411–452 (EGYK…GHVA). A compositionally biased stretch (acidic residues) spans 337–346 (DLGEDEDDSD). Over residues 411 to 428 (EGYKDIELPPEDFKRPAD) the composition is skewed to basic and acidic residues. Over residues 429–447 (SENDDENDEDEEEGEEEDA) the composition is skewed to acidic residues.

This sequence belongs to the protein kinase superfamily. RIO-type Ser/Thr kinase family. It depends on Mg(2+) as a cofactor. Expressed in pharynx (metacorpus and posterior bulbus). Expression is restricted to adult stage.

The enzyme catalyses L-seryl-[protein] + ATP = O-phospho-L-seryl-[protein] + ADP + H(+). The catalysed reaction is L-threonyl-[protein] + ATP = O-phospho-L-threonyl-[protein] + ADP + H(+). In terms of biological role, required for larval development. The polypeptide is Serine/threonine-protein kinase RIO2 (Caenorhabditis elegans).